A 582-amino-acid chain; its full sequence is Putative G-protein coupled receptor B0244.10 (582 aa).

4 consecutive transmembrane segments (helical) span residues 25–45, 70–90, 120–140, and 159–179; these read LYII…PLGL, ITFS…GFAV, WTFF…GLVI, and LLVQ…VFLT. An N-linked (GlcNAc...) asparagine glycan is attached at Asn190. A helical membrane pass occupies residues 199 to 218; the sequence is LTLGKWFIALYRFLFQMTNI. 2 N-linked (GlcNAc...) asparagine glycosylation sites follow: Asn221 and Asn237. 5 helical membrane-spanning segments follow: residues 253-273, 296-316, 329-349, 377-397, and 421-441; these read SLMI…AVLV, YIFV…IIII, TFAF…SLLG, IYII…PFGL, and WLLF…LLFV. Asn457 carries N-linked (GlcNAc...) asparagine glycosylation. 2 helical membrane-spanning segments follow: residues 475 to 495 and 513 to 533; these read TILV…AAFG and LIFP…TFLL. The N-linked (GlcNAc...) asparagine glycan is linked to Asn538.

Belongs to the G-protein coupled receptor 1 family. B0244 subfamily.

It localises to the cell membrane. In Caenorhabditis elegans, this protein is Putative G-protein coupled receptor B0244.10.